Reading from the N-terminus, the 845-residue chain is Envelope glycoprotein B (845 aa).

An N-terminal signal peptide occupies residues Met1–Ser26. Residues Arg27–Pro732 are Virion surface-facing. The segment at Asp29–Pro57 is disordered. Residues Thr33–Lys49 show a composition bias toward low complexity. 5 disulfide bridges follow: Cys68–Cys528, Cys85–Cys484, Cys157–Cys222, Cys315–Cys362, and Cys550–Cys587. The segment at Val124–Glu130 is involved in fusion and/or binding to host membrane. Asn179 is a glycosylation site (N-linked (GlcNAc...) asparagine; by host). Positions Gly208–Val216 are involved in fusion and/or binding to host membrane. Residues Asn254, Asn275, Asn355, Asn368, Asn372, Asn385, and Asn408 are each glycosylated (N-linked (GlcNAc...) asparagine; by host). The tract at residues His411 to Gly451 is disordered. Asn455, Asn562, Asn599, Asn614, and Asn628 each carry an N-linked (GlcNAc...) asparagine; by host glycan. A hydrophobic membrane proximal region region spans residues Leu678–Lys730. A helical transmembrane segment spans residues Leu733–Ser753. Topologically, residues Arg754–Glu845 are intravirion. The interval Arg802–Glu845 is disordered. Positions Ser811–Gly822 are enriched in polar residues. The Internalization motif motif lies at Tyr830–Leu833.

This sequence belongs to the herpesviridae glycoprotein B family. In terms of assembly, homotrimer; disulfide-linked. Binds to heparan sulfate proteoglycans. Interacts with gH/gL heterodimer. Interacts with host ITGAV-ITGB3; this interaction mediates viral entry. Post-translationally, a proteolytic cleavage by host furin generates two subunits that remain linked by disulfide bonds.

Its subcellular location is the virion membrane. It localises to the host cell membrane. The protein localises to the host endosome membrane. It is found in the host Golgi apparatus membrane. In terms of biological role, envelope glycoprotein that forms spikes at the surface of the virion envelope. Participates in viral entry through an RGD motif that binds ITGAV-ITGB3. Membrane fusion is mediated by the fusion machinery composed at least of gB and the heterodimer gH/gL. May be involved in the fusion between the virion envelope and the outer nuclear membrane during virion egress. The polypeptide is Envelope glycoprotein B (Homo sapiens (Human)).